The following is a 231-amino-acid chain: MLDREGFRPNVGIILINARNEVFWGKRIGEHSWQFPQGGIKYGETPEQAMYRELHEEIGLLPEHVRIVGRTRDWLRYEVPDKFIRREIRGHYRGQKQIWFLLRMAGRDCDVHLRATEHPEFDAWRWSDYWVPLEAVIEFKRDVYQLALTELSRFLNRNPRVPLSPYGVHHGRHGSGQRYAQQPGQPPTLAQRRPLQPVTQVAPVAPAAEAVQAVESDAVLPATPAPNPTES.

The Nudix hydrolase domain maps to 6–149; it reads GFRPNVGIIL…KRDVYQLALT (144 aa). The Nudix box signature appears at 38 to 59; that stretch reads GGIKYGETPEQAMYRELHEEIG. Residues 168–200 form a disordered region; the sequence is VHHGRHGSGQRYAQQPGQPPTLAQRRPLQPVTQ.

This sequence belongs to the Nudix hydrolase family. RppH subfamily. A divalent metal cation is required as a cofactor.

Its function is as follows. Accelerates the degradation of transcripts by removing pyrophosphate from the 5'-end of triphosphorylated RNA, leading to a more labile monophosphorylated state that can stimulate subsequent ribonuclease cleavage. The protein is RNA pyrophosphohydrolase of Cupriavidus pinatubonensis (strain JMP 134 / LMG 1197) (Cupriavidus necator (strain JMP 134)).